The following is a 207-amino-acid chain: Ribosomal RNA small subunit methyltransferase G (207 aa).

Residues Gly-73, Leu-78, 124-125 (VE), and Arg-139 each bind S-adenosyl-L-methionine.

Belongs to the methyltransferase superfamily. RNA methyltransferase RsmG family.

The protein localises to the cytoplasm. It carries out the reaction guanosine(527) in 16S rRNA + S-adenosyl-L-methionine = N(7)-methylguanosine(527) in 16S rRNA + S-adenosyl-L-homocysteine. Its function is as follows. Specifically methylates the N7 position of guanine in position 527 of 16S rRNA. The protein is Ribosomal RNA small subunit methyltransferase G of Klebsiella pneumoniae subsp. pneumoniae (strain ATCC 700721 / MGH 78578).